Reading from the N-terminus, the 360-residue chain is Phosphoserine aminotransferase (360 aa).

Arginine 42 contributes to the L-glutamate binding site. Residues alanine 76–serine 77, tryptophan 102, threonine 152, aspartate 172, and glutamine 195 contribute to the pyridoxal 5'-phosphate site. Residue lysine 196 is modified to N6-(pyridoxal phosphate)lysine. Asparagine 237 to threonine 238 lines the pyridoxal 5'-phosphate pocket.

This sequence belongs to the class-V pyridoxal-phosphate-dependent aminotransferase family. SerC subfamily. In terms of assembly, homodimer. It depends on pyridoxal 5'-phosphate as a cofactor.

Its subcellular location is the cytoplasm. It catalyses the reaction O-phospho-L-serine + 2-oxoglutarate = 3-phosphooxypyruvate + L-glutamate. The catalysed reaction is 4-(phosphooxy)-L-threonine + 2-oxoglutarate = (R)-3-hydroxy-2-oxo-4-phosphooxybutanoate + L-glutamate. It participates in amino-acid biosynthesis; L-serine biosynthesis; L-serine from 3-phospho-D-glycerate: step 2/3. In terms of biological role, catalyzes the reversible conversion of 3-phosphohydroxypyruvate to phosphoserine and of 3-hydroxy-2-oxo-4-phosphonooxybutanoate to phosphohydroxythreonine. The sequence is that of Phosphoserine aminotransferase from Bacillus thuringiensis subsp. konkukian (strain 97-27).